The sequence spans 942 residues: Isoleucine--tRNA ligase (942 aa).

A 'HIGH' region motif is present at residues 58-68 (PYANGDIHIGH). E566 is a binding site for L-isoleucyl-5'-AMP. The 'KMSKS' region signature appears at 607 to 611 (KMSKS). K610 provides a ligand contact to ATP. The Zn(2+) site is built by C905, C908, C925, and C928.

The protein belongs to the class-I aminoacyl-tRNA synthetase family. IleS type 1 subfamily. Monomer. Requires Zn(2+) as cofactor.

The protein resides in the cytoplasm. The catalysed reaction is tRNA(Ile) + L-isoleucine + ATP = L-isoleucyl-tRNA(Ile) + AMP + diphosphate. In terms of biological role, catalyzes the attachment of isoleucine to tRNA(Ile). As IleRS can inadvertently accommodate and process structurally similar amino acids such as valine, to avoid such errors it has two additional distinct tRNA(Ile)-dependent editing activities. One activity is designated as 'pretransfer' editing and involves the hydrolysis of activated Val-AMP. The other activity is designated 'posttransfer' editing and involves deacylation of mischarged Val-tRNA(Ile). The polypeptide is Isoleucine--tRNA ligase (Vibrio parahaemolyticus serotype O3:K6 (strain RIMD 2210633)).